The primary structure comprises 550 residues: Arginine--tRNA ligase (550 aa).

The 'HIGH' region motif lies at 130–140; the sequence is ANPTGPIHLGG.

Belongs to the class-I aminoacyl-tRNA synthetase family. As to quaternary structure, monomer.

Its subcellular location is the cytoplasm. It catalyses the reaction tRNA(Arg) + L-arginine + ATP = L-arginyl-tRNA(Arg) + AMP + diphosphate. The polypeptide is Arginine--tRNA ligase (Rhodococcus opacus (strain B4)).